A 102-amino-acid chain; its full sequence is Large ribosomal subunit protein bL21 (102 aa).

Belongs to the bacterial ribosomal protein bL21 family. In terms of assembly, part of the 50S ribosomal subunit. Contacts protein L20.

Functionally, this protein binds to 23S rRNA in the presence of protein L20. The sequence is that of Large ribosomal subunit protein bL21 from Exiguobacterium sibiricum (strain DSM 17290 / CCUG 55495 / CIP 109462 / JCM 13490 / 255-15).